We begin with the raw amino-acid sequence, 83 residues long: Kappa-actitoxin-Aer3a (83 aa).

Positions 1–22 (MKGQMIICLVLIALCMSVVVMA) are cleaved as a signal peptide. Residues 23-49 (QNLRAEELEKANPKDERVRSFERNQKR) constitute a propeptide that is removed on maturation. The region spanning 51-83 (CKDYLPKSECTQFRCRTSMKYKYTNCKKTCGTC) is the ShKT domain. Disulfide bonds link Cys-51–Cys-83, Cys-60–Cys-76, and Cys-65–Cys-80.

It belongs to the sea anemone type 1 potassium channel toxin family. Type 1a subfamily.

It is found in the secreted. It localises to the nematocyst. Its function is as follows. Specifically, dose-dependently and potently blocks the voltage-gated potassium channel Kv1.1/KCNA1 (Ki=1.6 pM). Moderately blocks potassium channel heterotetramers formed by 3 subunits of Kv1.1/KCNA1 and 1 subunit of Kv1.2/KCNA2 (Ki=56 nM) and weakly blocks those formed by 2 subunits of Kv1.1/KCNA1 and 2 subunits of Kv1.2/KCNA2 (Ki=14 nM). The sequence is that of Kappa-actitoxin-Aer3a from Anemonia erythraea (Sea anemone).